Here is a 241-residue protein sequence, read N- to C-terminus: Probable transcriptional regulatory protein Neut_0281 (241 aa).

Belongs to the TACO1 family.

Its subcellular location is the cytoplasm. The chain is Probable transcriptional regulatory protein Neut_0281 from Nitrosomonas eutropha (strain DSM 101675 / C91 / Nm57).